The sequence spans 211 residues: N-(5'-phosphoribosyl)anthranilate isomerase (211 aa).

It belongs to the TrpF family.

The enzyme catalyses N-(5-phospho-beta-D-ribosyl)anthranilate = 1-(2-carboxyphenylamino)-1-deoxy-D-ribulose 5-phosphate. Its pathway is amino-acid biosynthesis; L-tryptophan biosynthesis; L-tryptophan from chorismate: step 3/5. This chain is N-(5'-phosphoribosyl)anthranilate isomerase, found in Methanococcus maripaludis (strain DSM 14266 / JCM 13030 / NBRC 101832 / S2 / LL).